The chain runs to 337 residues: Undecaprenyl-phosphate 4-deoxy-4-formamido-L-arabinose transferase (337 aa).

2 consecutive transmembrane segments (helical) span residues leucine 235–valine 255 and phenylalanine 270–leucine 290.

It belongs to the glycosyltransferase 2 family.

It localises to the cell inner membrane. It carries out the reaction UDP-4-deoxy-4-formamido-beta-L-arabinose + di-trans,octa-cis-undecaprenyl phosphate = 4-deoxy-4-formamido-alpha-L-arabinopyranosyl di-trans,octa-cis-undecaprenyl phosphate + UDP. The protein operates within glycolipid biosynthesis; 4-amino-4-deoxy-alpha-L-arabinose undecaprenyl phosphate biosynthesis; 4-amino-4-deoxy-alpha-L-arabinose undecaprenyl phosphate from UDP-4-deoxy-4-formamido-beta-L-arabinose and undecaprenyl phosphate: step 1/2. It participates in bacterial outer membrane biogenesis; lipopolysaccharide biosynthesis. Its function is as follows. Catalyzes the transfer of 4-deoxy-4-formamido-L-arabinose from UDP to undecaprenyl phosphate. The modified arabinose is attached to lipid A and is required for resistance to polymyxin and cationic antimicrobial peptides. The protein is Undecaprenyl-phosphate 4-deoxy-4-formamido-L-arabinose transferase of Pseudomonas syringae pv. syringae (strain B728a).